The following is a 348-amino-acid chain: Sulfate/thiosulfate import ATP-binding protein CysA (348 aa).

Positions 3 to 237 (IEVRNIVKEF…PASAFVHGFI (235 aa)) constitute an ABC transporter domain. 35–42 (GPSGSGKT) lines the ATP pocket.

It belongs to the ABC transporter superfamily. Sulfate/tungstate importer (TC 3.A.1.6) family. In terms of assembly, the complex is composed of two ATP-binding proteins (CysA), two transmembrane proteins (CysT and CysW) and a solute-binding protein (CysP).

The protein resides in the cell inner membrane. The enzyme catalyses sulfate(out) + ATP + H2O = sulfate(in) + ADP + phosphate + H(+). It catalyses the reaction thiosulfate(out) + ATP + H2O = thiosulfate(in) + ADP + phosphate + H(+). Its function is as follows. Part of the ABC transporter complex CysAWTP involved in sulfate/thiosulfate import. Responsible for energy coupling to the transport system. This Rhodopseudomonas palustris (strain ATCC BAA-98 / CGA009) protein is Sulfate/thiosulfate import ATP-binding protein CysA.